Consider the following 336-residue polypeptide: Fructose-1,6-bisphosphatase class 1 (336 aa).

The Mg(2+) site is built by Glu98, Asp117, Leu119, and Asp120. Residues 120-123, Asn210, and Lys276 contribute to the substrate site; that span reads DGSS. Glu282 lines the Mg(2+) pocket.

This sequence belongs to the FBPase class 1 family. Homotetramer. The cofactor is Mg(2+).

The protein localises to the cytoplasm. It carries out the reaction beta-D-fructose 1,6-bisphosphate + H2O = beta-D-fructose 6-phosphate + phosphate. It participates in carbohydrate biosynthesis; gluconeogenesis. This is Fructose-1,6-bisphosphatase class 1 from Caulobacter vibrioides (strain ATCC 19089 / CIP 103742 / CB 15) (Caulobacter crescentus).